The sequence spans 647 residues: Exoribonuclease 2 (647 aa).

In terms of domain architecture, RNB spans 192-519 (RIDLTSLDFV…NHRLLKAIIQ (328 aa)). Residues 564-646 (EQRFTAEIID…ETRNIVARPT (83 aa)) enclose the S1 motif domain.

Belongs to the RNR ribonuclease family. RNase II subfamily.

It is found in the cytoplasm. The catalysed reaction is Exonucleolytic cleavage in the 3'- to 5'-direction to yield nucleoside 5'-phosphates.. Involved in mRNA degradation. Hydrolyzes single-stranded polyribonucleotides processively in the 3' to 5' direction. This Photorhabdus laumondii subsp. laumondii (strain DSM 15139 / CIP 105565 / TT01) (Photorhabdus luminescens subsp. laumondii) protein is Exoribonuclease 2.